We begin with the raw amino-acid sequence, 369 residues long: Peptide chain release factor 2 (369 aa).

Residue Q249 is modified to N5-methylglutamine.

This sequence belongs to the prokaryotic/mitochondrial release factor family. Methylated by PrmC. Methylation increases the termination efficiency of RF2.

Its subcellular location is the cytoplasm. Its function is as follows. Peptide chain release factor 2 directs the termination of translation in response to the peptide chain termination codons UGA and UAA. This Thermosipho africanus (strain TCF52B) protein is Peptide chain release factor 2.